A 685-amino-acid polypeptide reads, in one-letter code: MDEDKGKRDPIQMSLKGCRTNNGFVQNEDIPEQDPDPGSRDTPQPNAVSIPAPEEPHLKAVRPYAGMPKEVLFQFSGQARYRVPREILFWLTVVSVFLLIGATIAIIVISPKCLDWWQAGPIYQIYPRSFKDSDKDGNGDLKGIQEKLDYITALNIKTLWITSFYKSSLKDFRYAVEDFKEIDPIFGTMKDFENLVAAIHDKGLKLIIDFIPNHTSDKHPWFQSSRTRSGKYTDYYIWHNCTHVNGVTTPPNNWLSVYGNSSWHFDEVRKQCYFHQFLKEQPDLNFRNPAVQEEIKEIITFWLSKGVDGFSFDAVKFLLEAKDLRNEIQVNTSQIPDTVTHYSELYHDFTTTQVGMHDIVRDFRQTMNQYSREPGRYRFMGAEASAESIERTMMYYGLPFIQEADFPFNKYFTTIGTLSGHTVYEVITSWMENMPEGKWPNWMTGGPETPRLTSRVGSEYVNAMHMLLFTLPGTPITYYGEEIGMGDISVTNFNESYDSTTLVSKSPMQWDNSSNAGFTEANHTWLPTNSDYHTVNVDVQKTQPSSALRLYQDLSLLHATELVLSRGWFCLLRDDSHSVVYTRELDGIDNVFLVVLNFGESSTVLNLQGIISDLPPELRIRLSTNSASKGSAVDTRAISLEKGEGLVLEHSTKAPLHQQAAFRDRCFVSSRACYSSALDILYSSC.

Residues 1 to 10 (MDEDKGKRDP) show a composition bias toward basic and acidic residues. Residues 1–53 (MDEDKGKRDPIQMSLKGCRTNNGFVQNEDIPEQDPDPGSRDTPQPNAVSIPAP) are disordered. The Cytoplasmic portion of the chain corresponds to 1–88 (MDEDKGKRDP…ARYRVPREIL (88 aa)). Residues 89-109 (FWLTVVSVFLLIGATIAIIVI) form a helical; Signal-anchor for type II membrane protein membrane-spanning segment. Topologically, residues 110–685 (SPKCLDWWQA…SALDILYSSC (576 aa)) are extracellular. Asparagine 213 contributes to the Ca(2+) binding site. 3 N-linked (GlcNAc...) asparagine glycosylation sites follow: asparagine 213, asparagine 240, and asparagine 260. Cysteine 241 and cysteine 272 are disulfide-bonded. Positions 283, 317, 318, and 320 each coordinate Ca(2+). A glycan (N-linked (GlcNAc...) asparagine) is linked at asparagine 331. Serine 385 is subject to Phosphoserine. Asparagine 512 and asparagine 522 each carry an N-linked (GlcNAc...) asparagine glycan. Cystine bridges form between cysteine 570-cysteine 666 and cysteine 673-cysteine 685.

As to quaternary structure, disulfide-linked heterodimer composed of the catalytic light subunit SLC7A9 and the heavy subunit SLC3A1. The heterodimer is the minimal functional unit. Assembles in non-covalently linked heterotetramers (dimers of heterodimers) and higher order oligomers; the oligomerization is mediated by SLC3A1 likely to prevent degradation in the endoplasmic reticulum and facilitate heteromer trafficking to the plasma membrane. Disulfide-linked heterodimer composed of the catalytic light subunit SLC7A13 and the heavy subunit SLC3A1. In terms of tissue distribution, expressed in the brush border membrane in the kidney (at protein level). Highly expressed in renal tubules in the outer stripe of the outer medulla and medullary ray (at protein level). Also detected in the renal cortex. More abundant in male than female kidneys.

It is found in the cell membrane. It localises to the apical cell membrane. Functionally, acts as a chaperone that facilitates biogenesis and trafficking of functional transporter heteromers to the plasma membrane. Associates with SLC7A9 to form a functional transporter complex that mediates the electrogenic exchange between cationic amino acids and neutral amino acids, with a stoichiometry of 1:1. SLC7A9-SLC3A1 transporter has system b(0,+)-like activity with high affinity for extracellular cationic amino acids and L-cystine and lower affinity for intracellular neutral amino acids. Substrate exchange is driven by high concentration of intracellular neutral amino acids and the intracellular reduction of L-cystine to L-cysteine. SLC7A9-SLC3A1 acts as a major transporter for reabsorption of L-cystine and dibasic amino acids across the brush border membrane in early proximal tubules. Associates with SLC7A13 to form a functional complex that transports anionic and neutral amino acids via exchange or facilitated diffusion. SLC7A13-SLC3A1 may act as a major transporter for L-cystine in late proximal tubules, ensuring its reabsorption from the luminal fluid in exchange for cytosolic L-glutamate or L-aspartate. The sequence is that of Amino acid transporter heavy chain SLC3A1 from Mus musculus (Mouse).